A 295-amino-acid polypeptide reads, in one-letter code: Nucleotide-binding protein llmg_1557 (295 aa).

12-19 (GMSGAGKT) is a binding site for ATP. 63–66 (DMRS) lines the GTP pocket.

This sequence belongs to the RapZ-like family.

Functionally, displays ATPase and GTPase activities. The chain is Nucleotide-binding protein llmg_1557 from Lactococcus lactis subsp. cremoris (strain MG1363).